The sequence spans 98 residues: MEVTDVRLRRVNTDGRMRAIASITLDHEFVVHDIRVIDGNNGLFVAMPSKRTPDGEFRDIAHPINSSTRGKIQDAVLNEYHRLGEEEETIEYEEAGAS.

This sequence belongs to the SpoVG family.

Functionally, essential for sporulation. Interferes with or is a negative regulator of the pathway leading to asymmetric septation. The polypeptide is Putative septation protein SpoVG (Bacillus pumilus (strain SAFR-032)).